Here is a 405-residue protein sequence, read N- to C-terminus: G1/S-specific cyclin-D (405 aa).

Residues 76–200 (FYNCMEYEEA…LIVTTLQWET (125 aa)) form the Cyclin N-terminal domain. The tract at residues 301 to 405 (YTSEDAEKTE…STPPKIFKTL (105 aa)) is disordered. Residues 311–321 (PTPSAPASTQE) show a composition bias toward polar residues. A compositionally biased stretch (basic and acidic residues) spans 326-335 (QELKELKEEP). Positions 358–380 (SEQTPSTPLNDSGFSSDVSSPAS) are enriched in polar residues.

It belongs to the cyclin family. Cyclin D subfamily. As to quaternary structure, interacts with cdk-4; the interaction is likely involved in regulating cdk-4 activity.

In association with cdk-4, regulates the progression through the G1 phase of the cell cycle during postembryonic development. Regulates proliferation of the coelomocyte lineage and intestinal cells during late embryogenesis. In complex with cdk-4, involved in sex determination during gonadogenesis by regulating the asymmetric division of the somatic gonadal precursor cell (SGP). In Caenorhabditis elegans, this protein is G1/S-specific cyclin-D.